The sequence spans 506 residues: TOM1-like protein 3 (506 aa).

A VHS domain is found at A12–P141. A GAT domain is found at D180–K268. Disordered stretches follow at residues K266 to S328, E351 to P384, and E398 to I477. Residues D288–F298 are compositionally biased toward acidic residues. Phosphoserine is present on S294. Over residues P358 to D368 the composition is skewed to polar residues. At S383 the chain carries Phosphoserine. Over residues Q450–A460 the composition is skewed to polar residues. Residues P468–I477 are compositionally biased toward basic and acidic residues.

Belongs to the TOM1 family. As to expression, preferentially expressed in cauline leaves.

Its subcellular location is the membrane. In terms of biological role, might contribute to the loading of the ESCRT machinery. The chain is TOM1-like protein 3 from Arabidopsis thaliana (Mouse-ear cress).